The sequence spans 411 residues: Ornithine cyclodeaminase (411 aa).

Residues asparagine 236, alanine 237, aspartate 315, threonine 347, methionine 348, leucine 349, histidine 350, aspartate 368, aspartate 391, and valine 392 each coordinate NAD(+).

It belongs to the AgrE/ArgZ ornithine cyclodeaminase family. NAD(+) is required as a cofactor.

It carries out the reaction L-ornithine = L-proline + NH4(+). In terms of biological role, catalyzes the conversion of ornithine to proline, with the release of ammonia. The protein is Ornithine cyclodeaminase of Methanothermobacter thermautotrophicus (strain ATCC 29096 / DSM 1053 / JCM 10044 / NBRC 100330 / Delta H) (Methanobacterium thermoautotrophicum).